A 37-amino-acid chain; its full sequence is M-oxotoxin-Ot2b (37 aa).

As to expression, expressed by the venom gland.

The protein resides in the secreted. In terms of biological role, disrupts biological membranes, particularly those rich in phosphocholine. Has antimicrobial activity against Gram-negative bacterium E.coli, Gram-positive bacteria B.subtilis and S.aureus, and hemolytic activity against sheep, pig and guinea pig red blood cells. Has insecticidal activity against S.frugiperda ovarian cells by opening non-selective ion channels. Enhances the insecticidal activity of spider venom neurotoxic peptides. The protein is M-oxotoxin-Ot2b of Oxyopes takobius (Lynx spider).